The sequence spans 472 residues: MQSENYCGLLALRLLVSYHLKIHSQLDGINGNAFSIKIIVTHLFKRITRCISFVMCAIYYLQLYIKAWSSMKRYRKSLPALGVLILLGTTWTPVHTYAQIGFPDDKPAGGGGGDLTRQLATNVSTGIITGILNGTVPLQTALPILGFTNSTNQTCVCVPSGRCATTTVPTDGSGMIDVRIVTSQTSSPISPTPNIVTPPTCAAGLDRCCYPGPFQCGLQYPAVAAAKAPAAGQAYYGEYPWQAVLLGPGDIYVGSGALIDPLNVITAAHRISEYVSGARALRVRLGEWDASAASEPIPALEYTVSKFFVHPSYNAANLQNDIAMLRLSSAVPLGATPTITTACLPATSFVGTTCWVSGWGKNDFVSGSYQAIQKKVDVAVRSPADCQTALRTTRLGSTFVLDATSFVCAGGEAGKDACTGDGGSPLVCSLGGRYFVVGLVAWGIGCGTSNIPGVYVNVASYVPWITSTVSLA.

2 helical membrane passes run 51-71 (ISFV…WSSM) and 78-98 (LPAL…HTYA). Residues asparagine 122, asparagine 133, asparagine 149, and asparagine 152 are each glycosylated (N-linked (GlcNAc...) asparagine). Residues 223 to 470 (VAAAKAPAAG…YVPWITSTVS (248 aa)) form the Peptidase S1 domain. Intrachain disulfides connect cysteine 354/cysteine 428, cysteine 386/cysteine 408, and cysteine 418/cysteine 446.

It belongs to the peptidase S1 family. CLIP subfamily. Expressed at highest levels in head and salivary gland. Expressed in ovary and carcass. Minimal expression in midgut.

It localises to the membrane. Functionally, probable inactive serine protease. Induces migration of cultured mouse embryonic fibroblasts. Its function is as follows. (Microbial infection) Promotes dengue virus type 2 replication in the host. This is Inactive CLIP domain-containing serine protease A3 from Aedes aegypti (Yellowfever mosquito).